A 50-amino-acid polypeptide reads, in one-letter code: Sproutin (50 aa).

Serine 8 is subject to Phosphoserine; by PKC.

In terms of tissue distribution, brain.

Neurite outgrowth factor. The protein is Sproutin of Rattus norvegicus (Rat).